Reading from the N-terminus, the 204-residue chain is Transcription factor bHLH120 (204 aa).

2 disordered regions span residues 1 to 27 and 93 to 116; these read MNPS…KKEK and KREI…RSEP. The bHLH domain occupies 26-78; it reads EKKLLHRNIERQRRQEMAILFASLRSQLPLKYIKGKRAMSDHVNGAVSFIKDT.

As to quaternary structure, homodimer.

The protein localises to the nucleus. The sequence is that of Transcription factor bHLH120 (BHLH120) from Arabidopsis thaliana (Mouse-ear cress).